Consider the following 440-residue polypeptide: Cell division protein FtsA (440 aa).

The disordered stretch occupies residues 396–440; it reads VSSSEEQEQHHHQNEVQQRPKGKQKTQAEHNKQSKMKKLLSMFWE.

This sequence belongs to the FtsA/MreB family. In terms of assembly, homodimer. Interacts with FtsZ.

The protein resides in the cell membrane. Cell division protein that is required for the assembly of the Z ring. May serve as a membrane anchor for the Z ring. Binds and hydrolyzes ATP. Also involved in sporulation. This chain is Cell division protein FtsA, found in Bacillus subtilis (strain 168).